A 1006-amino-acid chain; its full sequence is E3 ubiquitin-protein ligase MIB1 (1006 aa).

Residues Asn6–Ala74 enclose the MIB/HERC2 1 domain. The ZZ-type zinc finger occupies His80–Ser132. 8 residues coordinate Zn(2+): Cys85, Cys88, Cys100, Cys103, Cys109, Cys112, His118, and His122. The region spanning Ser143–Ala221 is the MIB/HERC2 2 domain. Residue Ser408 is modified to Phosphoserine. 9 ANK repeats span residues Asp430–Gly460, Ala463–Ala492, Asp496–Ala525, Arg529–Leu558, Glu562–Ile591, Asn595–Glu627, Asp631–Ile661, Asn665–Ile694, and Asp698–Ala729. 2 RING-type zinc fingers span residues Cys819–Lys854 and Cys866–Arg901. Positions Gln935 to Met962 form a coiled coil. The RING-type 3 zinc-finger motif lies at Cys963 to Arg996.

Interacts with CEP131 and PCM1. Ubiquitinated; this modification is inhibited in response to cellular stress, such as ultraviolet light (UV) radiation or heat shock. Ubiquitinated; possibly via autoubiquitination. As to expression, detected in all tissues tested. Present in embryo, embryonic stem cells, bladder, skeletal muscle, bladder, uterus, testis, stomach, colon, ileum, trachea, lung, aorta, kidney, spleen, liver and vas deferens (at protein level). Highly expressed in testis.

It is found in the cytoplasm. The protein resides in the cytoskeleton. Its subcellular location is the microtubule organizing center. It localises to the centrosome. The protein localises to the centriolar satellite. It is found in the cell membrane. The catalysed reaction is S-ubiquitinyl-[E2 ubiquitin-conjugating enzyme]-L-cysteine + [acceptor protein]-L-lysine = [E2 ubiquitin-conjugating enzyme]-L-cysteine + N(6)-ubiquitinyl-[acceptor protein]-L-lysine.. Its pathway is protein modification; protein ubiquitination. In terms of biological role, E3 ubiquitin-protein ligase that mediates ubiquitination of Delta receptors, which act as ligands of Notch proteins. Positively regulates the Delta-mediated Notch signaling by ubiquitinating the intracellular domain of Delta, leading to endocytosis of Delta receptors. Involved in ubiquitination of centriolar satellite CEP131, CEP290 and PCM1 proteins and hence inhibits primary cilium formation in proliferating cells. Mediates 'Lys-63'-linked polyubiquitination of TBK1, which probably participates in kinase activation. Probably mediates ubiquitination and subsequent proteasomal degradation of DAPK1, thereby antagonizing anti-apoptotic effects of DAPK1 to promote TNF-induced apoptosis. The sequence is that of E3 ubiquitin-protein ligase MIB1 (Mib1) from Mus musculus (Mouse).